The chain runs to 250 residues: Electron transfer flavoprotein subunit beta (250 aa).

Belongs to the ETF beta-subunit/FixA family. In terms of assembly, heterodimer of an alpha and a beta subunit. FAD serves as cofactor. AMP is required as a cofactor.

It localises to the mitochondrion matrix. In terms of biological role, the electron transfer flavoprotein serves as a specific electron acceptor for several dehydrogenases, including five acyl-CoA dehydrogenases, glutaryl-CoA and sarcosine dehydrogenase. It transfers the electrons to the main mitochondrial respiratory chain via ETF-ubiquinone oxidoreductase (ETF dehydrogenase). This chain is Electron transfer flavoprotein subunit beta (etfb), found in Dictyostelium discoideum (Social amoeba).